Here is a 180-residue protein sequence, read N- to C-terminus: FMN reductase (NADH) RutF (180 aa).

It belongs to the non-flavoprotein flavin reductase family. RutF subfamily.

The catalysed reaction is FMNH2 + NAD(+) = FMN + NADH + 2 H(+). Catalyzes the reduction of FMN to FMNH2 which is used to reduce pyrimidine by RutA via the Rut pathway. The protein is FMN reductase (NADH) RutF of Bradyrhizobium diazoefficiens (strain JCM 10833 / BCRC 13528 / IAM 13628 / NBRC 14792 / USDA 110).